We begin with the raw amino-acid sequence, 202 residues long: FMN-dependent NADH:quinone oxidoreductase (202 aa).

Residues S9, 15-17 (SAS), 95-98 (MYNF), and 139-142 (TSGG) contribute to the FMN site.

Belongs to the azoreductase type 1 family. Homodimer. Requires FMN as cofactor.

It catalyses the reaction 2 a quinone + NADH + H(+) = 2 a 1,4-benzosemiquinone + NAD(+). The catalysed reaction is N,N-dimethyl-1,4-phenylenediamine + anthranilate + 2 NAD(+) = 2-(4-dimethylaminophenyl)diazenylbenzoate + 2 NADH + 2 H(+). Quinone reductase that provides resistance to thiol-specific stress caused by electrophilic quinones. Its function is as follows. Also exhibits azoreductase activity. Catalyzes the reductive cleavage of the azo bond in aromatic azo compounds to the corresponding amines. This chain is FMN-dependent NADH:quinone oxidoreductase, found in Pseudomonas savastanoi pv. phaseolicola (strain 1448A / Race 6) (Pseudomonas syringae pv. phaseolicola (strain 1448A / Race 6)).